A 271-amino-acid polypeptide reads, in one-letter code: ATP synthase subunit delta (271 aa).

This sequence belongs to the ATPase delta chain family. As to quaternary structure, F-type ATPases have 2 components, F(1) - the catalytic core - and F(0) - the membrane proton channel. F(1) has five subunits: alpha(3), beta(3), gamma(1), delta(1), epsilon(1). F(0) has three main subunits: a(1), b(2) and c(10-14). The alpha and beta chains form an alternating ring which encloses part of the gamma chain. F(1) is attached to F(0) by a central stalk formed by the gamma and epsilon chains, while a peripheral stalk is formed by the delta and b chains.

The protein resides in the cell membrane. In terms of biological role, f(1)F(0) ATP synthase produces ATP from ADP in the presence of a proton or sodium gradient. F-type ATPases consist of two structural domains, F(1) containing the extramembraneous catalytic core and F(0) containing the membrane proton channel, linked together by a central stalk and a peripheral stalk. During catalysis, ATP synthesis in the catalytic domain of F(1) is coupled via a rotary mechanism of the central stalk subunits to proton translocation. Its function is as follows. This protein is part of the stalk that links CF(0) to CF(1). It either transmits conformational changes from CF(0) to CF(1) or is implicated in proton conduction. In Streptomyces griseus subsp. griseus (strain JCM 4626 / CBS 651.72 / NBRC 13350 / KCC S-0626 / ISP 5235), this protein is ATP synthase subunit delta.